Reading from the N-terminus, the 621-residue chain is Kelch-like protein 6 (621 aa).

Positions 72–139 constitute a BTB domain; the sequence is TDVILCVDIQ…TYTSKALITK (68 aa). Positions 174 to 276 constitute a BACK domain; the sequence is CVGILRLADT…DPWYFVETVE (103 aa). 6 Kelch repeats span residues 320–367, 378–421, 422–468, 470–516, 517–558, and 560–606; these read VFMI…NKKW, EVYI…VLGG, KVYV…SHKK, LYVI…SFRD, RIYV…PCNN, and LYIT…TIRK.

As to expression, found in germinal center B-cells.

In terms of biological role, involved in B-lymphocyte antigen receptor signaling and germinal center formation. This is Kelch-like protein 6 (KLHL6) from Homo sapiens (Human).